The following is a 1147-amino-acid chain: SR-related and CTD-associated factor 4 (1147 aa).

The CID domain occupies 1-139 (MDAVNAFNQE…PLLDMAAGTS (139 aa)). At K49 the chain carries N6-acetyllysine. Disordered stretches follow at residues 145–179 (AENV…AVPQ), 235–254 (KTTP…PEQK), 269–331 (DEPE…QQPA), and 424–502 (VKRH…KPET). At S154 the chain carries Phosphoserine. Low complexity-rich tracts occupy residues 283-292 (TAVTTTAPAA) and 299-310 (TATVPAAAAPAA). Residues 424 to 433 (VKRHMSDNRK) are compositionally biased toward basic and acidic residues. Basic residues predominate over residues 434 to 475 (SRSRSASRSPKRRRSRSGSRSRRSRHRRSRSRSRDRRRHSPR). A compositionally biased stretch (basic and acidic residues) spans 477–492 (RSQERRDREKERERRQ). The 75-residue stretch at 508–582 (TTLWVGQLDK…KSIKIAWALN (75 aa)) folds into the RRM domain. Disordered regions lie at residues 629-661 (DWKG…IPKP) and 879-1147 (RPMP…EAPR). S656 is modified (phosphoserine). A compositionally biased stretch (pro residues) spans 879–913 (RPMPPHMMHRGPPPGPGGFAMPPPHGMKGPFPPHG). A compositionally biased stretch (low complexity) spans 941-965 (QQPPQQPQQQPQPQAPQQPQQQQQQ). The span at 966-977 (QPPPSQQPPPTQ) shows a compositional bias: pro residues. Residue S1004 is modified to Phosphoserine. The segment covering 1009 to 1085 (VENDRERYGN…RGKEKPEVTD (77 aa)) has biased composition (basic and acidic residues).

As to quaternary structure, interacts with POLR2A; via C-terminal heptapeptide repeat domain (CTD) phosphorylated at 'Ser-2' and 'Ser-5'.

The protein resides in the nucleus. Functionally, anti-terminator protein required to prevent early mRNA termination during transcription. Together with SCAF8, acts by suppressing the use of early, alternative poly(A) sites, thereby preventing the accumulation of non-functional truncated proteins. Mechanistically, associates with the phosphorylated C-terminal heptapeptide repeat domain (CTD) of the largest RNA polymerase II subunit (POLR2A), and subsequently binds nascent RNA upstream of early polyadenylation sites to prevent premature mRNA transcript cleavage and polyadenylation. Independently of SCAF8, also acts as a suppressor of transcriptional readthrough. This is SR-related and CTD-associated factor 4 from Homo sapiens (Human).